A 344-amino-acid chain; its full sequence is Ferrochelatase (344 aa).

Fe cation-binding residues include histidine 214 and glutamate 295.

This sequence belongs to the ferrochelatase family.

It is found in the cytoplasm. It catalyses the reaction heme b + 2 H(+) = protoporphyrin IX + Fe(2+). It functions in the pathway porphyrin-containing compound metabolism; protoheme biosynthesis; protoheme from protoporphyrin-IX: step 1/1. Its function is as follows. Catalyzes the ferrous insertion into protoporphyrin IX. This chain is Ferrochelatase, found in Rhizobium johnstonii (strain DSM 114642 / LMG 32736 / 3841) (Rhizobium leguminosarum bv. viciae).